A 213-amino-acid polypeptide reads, in one-letter code: Ribosomal RNA small subunit methyltransferase G (213 aa).

S-adenosyl-L-methionine-binding positions include Gly-55, 105-106, and Arg-124; that span reads AE.

Belongs to the methyltransferase superfamily. RNA methyltransferase RsmG family.

It is found in the cytoplasm. Functionally, specifically methylates the N7 position of a guanine in 16S rRNA. This Fervidobacterium nodosum (strain ATCC 35602 / DSM 5306 / Rt17-B1) protein is Ribosomal RNA small subunit methyltransferase G.